The chain runs to 362 residues: MSLADQALSYVRAISPYQPGKPITELAREMGIPVEKIVKLASNENPLGMSPKARKAVEAAISGIERYPDQFDLIAKVAERCGVSSNQIVLGNGSNDVLDLIARVFLAPGRSAVFAQHAFAVYPLATLSTGAELISTPAKNYGHDLNAMRAAIRPDTRIVWIANPNNPTGNFLPYPEVRAFLEVVPKDVVVVLDEAYNEYIPPAERVDTATWIKDFPNLVVCRTFSKIFGLAGLRVGYALASTEVADLMNRIRQPFNVNNLAIAAAVAALDDHLFVADSYELNRRGMEQIIAGLKRFGLEHIPSHGNFVTFRAGDAAVVNQKLLKQGVIVRPIGGYGLPEWLRVTIGTEPENARFLEALEKAL.

At Lys226 the chain carries N6-(pyridoxal phosphate)lysine.

It belongs to the class-II pyridoxal-phosphate-dependent aminotransferase family. Histidinol-phosphate aminotransferase subfamily. As to quaternary structure, homodimer. The cofactor is pyridoxal 5'-phosphate.

It catalyses the reaction L-histidinol phosphate + 2-oxoglutarate = 3-(imidazol-4-yl)-2-oxopropyl phosphate + L-glutamate. It functions in the pathway amino-acid biosynthesis; L-histidine biosynthesis; L-histidine from 5-phospho-alpha-D-ribose 1-diphosphate: step 7/9. The sequence is that of Histidinol-phosphate aminotransferase 1 from Dechloromonas aromatica (strain RCB).